Consider the following 318-residue polypeptide: Mitochondrial thiamine pyrophosphate carrier (318 aa).

Solcar repeat units follow at residues 13-106 (ISNV…LTEL), 116-202 (RDFS…LKRA), and 214-309 (NGNF…FCNF). Residues 19–39 (AVAGSVSGLVTRVLISPLDVI) traverse the membrane as a helical segment. Residue S51 is modified to Phosphoserine. Transmembrane regions (helical) follow at residues 87-107 (LLSI…TELV), 122-142 (FLCG…VDVL), 173-193 (VFYK…GFQF), and 220-240 (LLCG…LDLF). The Substrate recognition motif lies at 241-246 (KKRLQV). Residues 293–313 (ALSTGLVFFWYELFCNFFHHM) traverse the membrane as a helical segment.

It belongs to the mitochondrial carrier (TC 2.A.29) family.

It localises to the mitochondrion membrane. The catalysed reaction is thiamine phosphate(out) + thiamine diphosphate(in) = thiamine phosphate(in) + thiamine diphosphate(out). Mitochondrial transporter mediating uptake of thiamine diphosphate into mitochondria. It is not clear if the antiporter activity is affected by the membrane potential or by the proton electrochemical gradient. In Bos taurus (Bovine), this protein is Mitochondrial thiamine pyrophosphate carrier (SLC25A19).